Consider the following 209-residue polypeptide: Uracil phosphoribosyltransferase (209 aa).

Residues Arg-79, Arg-104, and Asp-131–Ser-139 each bind 5-phospho-alpha-D-ribose 1-diphosphate. Uracil contacts are provided by residues Ile-194 and Gly-199–Ala-201. Residue Asp-200 coordinates 5-phospho-alpha-D-ribose 1-diphosphate.

This sequence belongs to the UPRTase family. The cofactor is Mg(2+).

The catalysed reaction is UMP + diphosphate = 5-phospho-alpha-D-ribose 1-diphosphate + uracil. Its pathway is pyrimidine metabolism; UMP biosynthesis via salvage pathway; UMP from uracil: step 1/1. Allosterically activated by GTP. Functionally, catalyzes the conversion of uracil and 5-phospho-alpha-D-ribose 1-diphosphate (PRPP) to UMP and diphosphate. The chain is Uracil phosphoribosyltransferase from Clostridium tetani (strain Massachusetts / E88).